Here is a 597-residue protein sequence, read N- to C-terminus: MDRFRPLAVLIAAALTLSGTTALSSAARAADADLARNGGFEAGLDGWTCTAGTTVNSPVRSGSSALKATPAGSDNARCAQTVTVQPNSQYTLSGHVQGSYVYLGASGTGTTDVSTWTQSAPDWRQLTTTFRTGPSTTRVTLYTHGWYGTGAYHADDISLVGPGGGTEQPPAPPTGLRTGSVTATSVALSWSPVTGATGYAVYRDGVKVATASGTSATVTGLTPDTAYAFQVAAVNGAGESAKSATVTATTAPGTGGGSADLPPHALVGYLHASFANGSGYTRLADVPDSWDVIDLAFGEPTSVTSGDIRFDRCPATECPNVESDAEFKAAIKAKQAAGKKVLISIGGQNGQVQLTTTAARDTFVSSVSKIIDEYGLDGLDIDFEGHSLSLNADDTDFKNPKTPVIVNLIQALKTLKAKYGDDFVLTMAPETFFVQLGYQYYGTGKWGGQDPRAGAYLPVIHALRDDLTLLHVQDYNSGPIMGLDNQYHSMGGADFHIAMTDMLLTGFPVAGDAANVFPPLRADQVAIGMPATTNAGNGHVAPAEAVKTLDCLTRKTNCGSYATHGTWPALRALMTWSINWDRFGGWEFQRTFDGYFG.

A signal peptide (or 32) is located at residues 1–29; sequence MDRFRPLAVLIAAALTLSGTTALSSAARA. Positions 172 to 253 constitute a Fibronectin type-III domain; the sequence is PPTGLRTGSV…ATVTATTAPG (82 aa). One can recognise a GH18 domain in the interval 264 to 597; it reads HALVGYLHAS…FQRTFDGYFG (334 aa). E384 acts as the Proton donor in catalysis.

The protein belongs to the glycosyl hydrolase 18 family. Chitinase class II subfamily. Post-translationally, the N-terminus is blocked.

It carries out the reaction Random endo-hydrolysis of N-acetyl-beta-D-glucosaminide (1-&gt;4)-beta-linkages in chitin and chitodextrins.. Inhibited by the pseudosugar allosamidin A. In terms of biological role, exochitinase that generates exclusively chitobiose from chitotetraose, chitohexaose, and colloidal high-molecular mass chitin. In Streptomyces olivaceoviridis (Streptomyces corchorusii), this protein is Exochitinase 1 (chi01).